The primary structure comprises 629 residues: Proteoglycan Cow (629 aa).

Residues 1 to 27 (MKHSPLIASACLALVLMSSSLIGSTEA) form the signal peptide. 2 disordered regions span residues 118-186 (KRRV…ESKE) and 198-223 (GDKQ…DDDE). The segment covering 128 to 143 (DSQDAEDINNDDEDNS) has biased composition (acidic residues). A glycan (N-linked (GlcNAc...) asparagine) is linked at Asn-142. The segment covering 144–159 (SDGGSSNSSPTGTNNA) has biased composition (low complexity). Residues 167-186 (EETDDEDKSLSLGDDDESKE) show a composition bias toward acidic residues. The 52-residue stretch at 222-273 (DEELDNCKPCPVAKPTFLCGADNRTYSSLCRLDYHNCIHSTSIRIACKGFCP) folds into the Kazal-like domain. 3 disulfides stabilise this stretch: Cys-228–Cys-258, Cys-231–Cys-251, and Cys-240–Cys-272. The N-linked (GlcNAc...) asparagine glycan is linked to Asn-244. The tract at residues 298 to 356 (SLDQQQQQQQQQQQQQQQQQAYKDSNNNNIMMNSGNIMGGNNNDFNTIMNDKEDNNRHN) is disordered. Low complexity predominate over residues 301–340 (QQQQQQQQQQQQQQQQQAYKDSNNNNIMMNSGNIMGGNNN). EF-hand domains lie at 468-503 (ACKT…QNER) and 508-535 (FIDT…TDRP). Residues Asp-481, Asn-483, Asp-485, Gln-487, and Glu-492 each contribute to the Ca(2+) site. The region spanning 533–594 (DRPCAAVRRR…NTRTRGKPNC (62 aa)) is the Thyroglobulin type-1 domain. Intrachain disulfides connect Cys-536/Cys-555, Cys-566/Cys-573, and Cys-575/Cys-594. The interval 602 to 629 (ASLTSDDEDEGADDEDSAEGSADQMLVF) is disordered. The span at 606–619 (SDDEDEGADDEDSA) shows a compositional bias: acidic residues. The span at 620–629 (EGSADQMLVF) shows a compositional bias: low complexity.

In terms of assembly, interacts (in heparan sulfate-bound form) with wg. In terms of processing, contains heparan sulfate O-linked oligosaccharides. As to expression, in the wing disk, detected throughout the disk where it is localized primarily to the apical surface but is also present at the basal surface (at protein level).

The protein localises to the secreted. Its function is as follows. Binds to the Wnt signaling protein wg, stabilizes it and promotes its extracellular distribution. This is required for establishment of a wg gradient during development to allow for regulation of target genes at different levels. The chain is Proteoglycan Cow from Drosophila melanogaster (Fruit fly).